The following is a 114-amino-acid chain: Abscisic stress-ripening protein 2 (114 aa).

Disordered stretches follow at residues 1–25 and 88–114; these read MAEE…GGPV and FHEH…HHHY. Residues 7–16 are compositionally biased toward basic residues; that stretch reads QHHHHLFHHK. Positions 97 to 107 are enriched in basic and acidic residues; that stretch reads AKKEKKEVEGG.

The protein belongs to the abscisic acid and water stress-induced protein family.

This is Abscisic stress-ripening protein 2 from Solanum lycopersicum (Tomato).